Reading from the N-terminus, the 558-residue chain is Kelch-like protein 23 (558 aa).

Positions 36-104 constitute a BTB domain; sequence TDITLQCPSG…AYTSQIEITK (69 aa). The region spanning 139–240 is the BACK domain; that stretch reads CIGMHSFAEF…DPVYLKTALG (102 aa). 6 Kelch repeats span residues 274-320, 321-369, 370-416, 418-466, 467-508, and 510-557; these read TMYI…CLGP, NIYV…TLGG, CVYA…VLHD, IYVI…PFEN, KLYL…IMNG, and IYVT…CVYN.

The sequence is that of Kelch-like protein 23 (KLHL23) from Homo sapiens (Human).